We begin with the raw amino-acid sequence, 246 residues long: Type III pantothenate kinase (246 aa).

6 to 13 (DVGNSRIK) lines the ATP pocket. Substrate contacts are provided by residues tyrosine 93 and 100 to 103 (GSDR). Aspartate 102 (proton acceptor) is an active-site residue. An ATP-binding site is contributed by threonine 125. Threonine 175 provides a ligand contact to substrate.

Belongs to the type III pantothenate kinase family. As to quaternary structure, homodimer. NH4(+) is required as a cofactor. It depends on K(+) as a cofactor.

Its subcellular location is the cytoplasm. The catalysed reaction is (R)-pantothenate + ATP = (R)-4'-phosphopantothenate + ADP + H(+). It participates in cofactor biosynthesis; coenzyme A biosynthesis; CoA from (R)-pantothenate: step 1/5. Catalyzes the phosphorylation of pantothenate (Pan), the first step in CoA biosynthesis. The sequence is that of Type III pantothenate kinase from Dichelobacter nodosus (strain VCS1703A).